The chain runs to 418 residues: AP-3 complex subunit mu-1 (418 aa).

The 242-residue stretch at 176–417 folds into the MHD domain; the sequence is NNEAYFDVVE…VTKAGKFQVR (242 aa).

This sequence belongs to the adaptor complexes medium subunit family. As to quaternary structure, adaptor protein complex 3 (AP-3) is a heterotetramer composed of two large adaptins (delta-type subunit AP3D1 and beta-type subunit AP3B1 or AP3B2), a medium adaptin (mu-type subunit AP3M1 or AP3M2) and a small adaptin (sigma-type subunit APS1 or AP3S2). Interacts with AGAP1. AP-3 associates with the BLOC-1 complex.

It is found in the golgi apparatus. It localises to the cytoplasmic vesicle membrane. Its function is as follows. Part of the AP-3 complex, an adaptor-related complex which is not clathrin-associated. The complex is associated with the Golgi region as well as more peripheral structures. It facilitates the budding of vesicles from the Golgi membrane and may be directly involved in trafficking to lysosomes. In concert with the BLOC-1 complex, AP-3 is required to target cargos into vesicles assembled at cell bodies for delivery into neurites and nerve terminals. In Mus musculus (Mouse), this protein is AP-3 complex subunit mu-1 (Ap3m1).